Here is a 303-residue protein sequence, read N- to C-terminus: Aspartate carbamoyltransferase catalytic subunit (303 aa).

Residues Arg51 and Thr52 each coordinate carbamoyl phosphate. Lys80 provides a ligand contact to L-aspartate. Residues Arg101, His129, and Gln132 each coordinate carbamoyl phosphate. 2 residues coordinate L-aspartate: Arg162 and Arg221. Positions 260 and 261 each coordinate carbamoyl phosphate.

The protein belongs to the aspartate/ornithine carbamoyltransferase superfamily. ATCase family. As to quaternary structure, heterooligomer of catalytic and regulatory chains.

The enzyme catalyses carbamoyl phosphate + L-aspartate = N-carbamoyl-L-aspartate + phosphate + H(+). It functions in the pathway pyrimidine metabolism; UMP biosynthesis via de novo pathway; (S)-dihydroorotate from bicarbonate: step 2/3. In terms of biological role, catalyzes the condensation of carbamoyl phosphate and aspartate to form carbamoyl aspartate and inorganic phosphate, the committed step in the de novo pyrimidine nucleotide biosynthesis pathway. The chain is Aspartate carbamoyltransferase catalytic subunit from Saccharolobus islandicus (strain M.16.27) (Sulfolobus islandicus).